The chain runs to 273 residues: 2,3,4,5-tetrahydropyridine-2,6-dicarboxylate N-succinyltransferase (273 aa).

Substrate contacts are provided by arginine 104 and aspartate 141.

This sequence belongs to the transferase hexapeptide repeat family. In terms of assembly, homotrimer.

Its subcellular location is the cytoplasm. It catalyses the reaction (S)-2,3,4,5-tetrahydrodipicolinate + succinyl-CoA + H2O = (S)-2-succinylamino-6-oxoheptanedioate + CoA. It functions in the pathway amino-acid biosynthesis; L-lysine biosynthesis via DAP pathway; LL-2,6-diaminopimelate from (S)-tetrahydrodipicolinate (succinylase route): step 1/3. In Aromatoleum aromaticum (strain DSM 19018 / LMG 30748 / EbN1) (Azoarcus sp. (strain EbN1)), this protein is 2,3,4,5-tetrahydropyridine-2,6-dicarboxylate N-succinyltransferase.